A 309-amino-acid polypeptide reads, in one-letter code: Protease HtpX homolog (309 aa).

The next 2 helical transmembrane spans lie at 7–27 (TTVL…MLGG) and 29–49 (QGMM…YWYS). His-131 lines the Zn(2+) pocket. Glu-132 is a catalytic residue. Residue His-135 participates in Zn(2+) binding. Helical transmembrane passes span 141–161 (ILIG…ASMA) and 182–202 (IGLI…QMAI). Glu-207 is a Zn(2+) binding site. The disordered stretch occupies residues 278–309 (RHGSDSGTGNRDSSIRRRNMNTEAKAAWDRLR).

It belongs to the peptidase M48B family. Zn(2+) serves as cofactor.

The protein resides in the cell inner membrane. This chain is Protease HtpX homolog, found in Desulforapulum autotrophicum (strain ATCC 43914 / DSM 3382 / VKM B-1955 / HRM2) (Desulfobacterium autotrophicum).